Consider the following 282-residue polypeptide: Chlorite dismutase (282 aa).

Residues 1 to 31 form the signal peptide; the sequence is MTNLSIHNFKLSLVAAVIGSAMVMTSSPVAA. Residue E104 participates in Ca(2+) binding. H204 provides a ligand contact to heme. The active-site Proton acceptor is R217. Ca(2+)-binding residues include D226 and T265.

This sequence belongs to the chlorite dismutase family. In terms of assembly, homopentamer. Heme b serves as cofactor.

The protein localises to the periplasm. The enzyme catalyses chloride + O2 = chlorite. Catalyzes the heme-dependent decomposition of chlorite to O(2) and chloride with high efficiency and specificity. Used to detoxify chlorite, a by-product of the reduction of perchlorate, a primarily anthropogenic pollutant, in perchlorate-respiring bacteria. This is Chlorite dismutase from Dechloromonas aromatica (strain RCB).